A 319-amino-acid polypeptide reads, in one-letter code: Probable deoxyhypusine synthase (319 aa).

Catalysis depends on K287, which acts as the Nucleophile.

Belongs to the deoxyhypusine synthase family. Requires NAD(+) as cofactor.

The catalysed reaction is [eIF5A protein]-L-lysine + spermidine = [eIF5A protein]-deoxyhypusine + propane-1,3-diamine. Its pathway is protein modification; eIF5A hypusination. Functionally, catalyzes the NAD-dependent oxidative cleavage of spermidine and the subsequent transfer of the butylamine moiety of spermidine to the epsilon-amino group of a specific lysine residue of the eIF-5A precursor protein to form the intermediate deoxyhypusine residue. In Ignicoccus hospitalis (strain KIN4/I / DSM 18386 / JCM 14125), this protein is Probable deoxyhypusine synthase.